A 238-amino-acid polypeptide reads, in one-letter code: Dolichyldiphosphatase 1 (238 aa).

4 helical membrane passes run 33-53, 100-120, 130-150, and 162-182; these read LAYLSLSPVVIIVGFVTLIIF, PSSHSQFMWFFSVYSFLFLYL, FLDLLWRHVLSLGLLTAAFLV, and WSQVLYGGVAGSLMAIAWFAF.

This sequence belongs to the dolichyldiphosphatase family.

It is found in the endoplasmic reticulum membrane. The enzyme catalyses a di-trans,poly-cis-dolichyl diphosphate + H2O = a di-trans,poly-cis-dolichyl phosphate + phosphate + H(+). Its pathway is protein modification; protein glycosylation. In terms of biological role, required for efficient N-glycosylation. Necessary for maintaining optimal levels of dolichol-linked oligosaccharides. Hydrolyzes dolichyl pyrophosphate at a very high rate and dolichyl monophosphate at a much lower rate. Does not act on phosphatidate. The chain is Dolichyldiphosphatase 1 (DOLPP1) from Rhinolophus ferrumequinum (Greater horseshoe bat).